The sequence spans 673 residues: UvrABC system protein B (673 aa).

The Helicase ATP-binding domain occupies glutamate 26–arginine 414. Position 39-46 (glycine 39–threonine 46) interacts with ATP. A Beta-hairpin motif is present at residues tyrosine 92–valine 115. In terms of domain architecture, Helicase C-terminal spans glutamine 431 to leucine 597. The UVR domain occupies leucine 633–leucine 668.

Belongs to the UvrB family. In terms of assembly, forms a heterotetramer with UvrA during the search for lesions. Interacts with UvrC in an incision complex.

Its subcellular location is the cytoplasm. Functionally, the UvrABC repair system catalyzes the recognition and processing of DNA lesions. A damage recognition complex composed of 2 UvrA and 2 UvrB subunits scans DNA for abnormalities. Upon binding of the UvrA(2)B(2) complex to a putative damaged site, the DNA wraps around one UvrB monomer. DNA wrap is dependent on ATP binding by UvrB and probably causes local melting of the DNA helix, facilitating insertion of UvrB beta-hairpin between the DNA strands. Then UvrB probes one DNA strand for the presence of a lesion. If a lesion is found the UvrA subunits dissociate and the UvrB-DNA preincision complex is formed. This complex is subsequently bound by UvrC and the second UvrB is released. If no lesion is found, the DNA wraps around the other UvrB subunit that will check the other stand for damage. The polypeptide is UvrABC system protein B (Shigella dysenteriae serotype 1 (strain Sd197)).